Consider the following 349-residue polypeptide: Terpene cyclase janA (349 aa).

Residue asparagine 80 is glycosylated (N-linked (GlcNAc...) asparagine). Helical transmembrane passes span 81–101 (LSLYGVAFASALVPMWLVIVL), 116–136 (LAFLAGPLVQCLGPGLVIPAI), 155–175 (IGFYPSSMIIGYILPLILAAL), 189–209 (LIAVWQGWPVYTSLIMLIIHY), 223–243 (IACAFAFACSTAGHLAFLWFA), and 308–328 (VILIFGMAGVVFLGPCSVALL).

The protein belongs to the membrane-bound ascI terpene cyclase family.

The protein localises to the membrane. The protein operates within secondary metabolite biosynthesis. Part of the gene cluster that mediates the biosynthesis of the indole diterpenes janthitremanes such as shearinine K or shearinine A. The geranylgeranyl diphosphate (GGPP) synthase janG catalyzes the first step in janthitremane biosynthesis via conversion of farnesyl pyrophosphate and isopentyl pyrophosphate into geranylgeranyl pyrophosphate (GGPP). Condensation of indole-3-glycerol phosphate with GGPP by the prenyl transferase janC then forms 3-geranylgeranylindole (3-GGI). Epoxidation by the FAD-dependent monooxygenase janM leads to a epoxidized-GGI that is substrate of the terpene cyclase janB for cyclization to yield paspaline. Paspaline is subsequently converted to 13-desoxypaspaline by the cytochrome P450 monooxygenase janP, via beta-PC-M6 in a series of alpha-face oxidations. The cytochrome P450 monooxygenase janQ is proposed to carry out sequential beta-face oxidation steps at C-7 and C-13 of 13-desoxypaspaline to form paspalicine and paspalinine respectively. The indole diterpene prenyltransferase janD may then convert paspalinine into shearinine K which is substrate of janO and/or additional enzymes for oxidation and cyclization to generate shearinine A. This is Terpene cyclase janA from Penicillium janthinellum (Penicillium vitale).